Reading from the N-terminus, the 1279-residue chain is Mediator of DNA damage checkpoint protein 1 (1279 aa).

The disordered stretch occupies residues 1-22 (MENTQVIDWDAEEEEETEISSG). Positions 1-150 (MENTQVIDWD…PRSLLTIEKT (150 aa)) are interaction with CHEK2. The tract at residues 2-222 (ENTQVIDWDA…SSPFGLGSDT (221 aa)) is interaction with the MRN complex. Residue Thr-4 is modified to Phosphothreonine. The segment covering 9 to 18 (WDAEEEEETE) has biased composition (acidic residues). Residues 54-105 (NVVGRSPDCSVALPFPSISKQHAVIEISAWNKAPILQDCGSLNGTQIVKPPR) form the FHA domain. Thr-146 carries the post-translational modification Phosphothreonine. Disordered stretches follow at residues 156–394 (RSQN…EEVS), 409–634 (LWSG…KHAK), and 714–744 (ETSEPIDTHEAHGSQPSLPGEPPGHQHPVPT). Ser-168 and Ser-176 each carry phosphoserine. Over residues 179–192 (SVANGSRNTASPSA) the composition is skewed to polar residues. 2 positions are modified to phosphoserine: Ser-198 and Ser-220. A Phosphothreonine modification is found at Thr-222. The span at 264 to 277 (TKDKFKDTKMKEEA) shows a compositional bias: basic and acidic residues. A compositionally biased stretch (low complexity) spans 278–292 (GSAGVPVGSVVEGSP). Ser-298 bears the Phosphoserine mark. Phosphothreonine is present on Thr-300. Residue Ser-314 is modified to Phosphoserine. Thr-316 carries the phosphothreonine modification. Phosphoserine is present on residues Ser-350 and Ser-354. Residue Thr-356 is modified to Phosphothreonine. A phosphoserine mark is found at Ser-372 and Ser-380. Over residues 381–393 (DTDEEERGEEEEV) the composition is skewed to acidic residues. Position 382 is a phosphothreonine (Thr-382). A phosphoserine mark is found at Ser-394, Ser-411, Ser-421, Ser-434, and Ser-438. Residues 421 to 435 (SQPQVLVERSQSASG) show a composition bias toward polar residues. Thr-440 carries the phosphothreonine modification. Ser-457 carries the phosphoserine modification. Thr-466 carries the phosphothreonine modification. Ser-488, Ser-489, Ser-550, Ser-587, and Ser-589 each carry phosphoserine. The segment covering 545 to 561 (QEGSSSPVADIRMSQQP) has biased composition (polar residues). Residues 620-634 (GREREAHVGGTKHAK) show a composition bias toward basic and acidic residues. Ser-730 and Ser-745 each carry phosphoserine. Lys-764 bears the N6-acetyllysine mark. The segment at 772-1086 (QMMPDGKASG…TKPNQEAAAP (315 aa)) is disordered. Ser-793, Ser-801, and Ser-824 each carry phosphoserine. Residues 798-817 (ASASPQSLLTSQSQKQSTPQ) show a composition bias toward low complexity. Polar residues-rich tracts occupy residues 862-889 (TCPTNQPAASRPTSRPTRGRANRSSTRT), 901-929 (QPSTSTEQPGIPNLTSQVTEGRAHSTSVN), and 942-956 (PLTSAEQSVTSNLNP). Thr-889 is subject to Phosphothreonine. The residue at position 951 (Thr-951) is a Phosphothreonine. Lys-991 is covalently cross-linked (Glycyl lysine isopeptide (Lys-Gly) (interchain with G-Cter in SUMO2)). The span at 994 to 1014 (STPAEPEPQSSASQSSGASEA) shows a compositional bias: low complexity. 4 positions are modified to phosphoserine: Ser-1008, Ser-1009, Ser-1012, and Ser-1016. Positions 1032–1047 (VVKEEDPGEIQVKEEP) are enriched in basic and acidic residues. Residue Lys-1034 forms a Glycyl lysine isopeptide (Lys-Gly) (interchain with G-Cter in SUMO1); alternate linkage. Lys-1034 participates in a covalent cross-link: Glycyl lysine isopeptide (Lys-Gly) (interchain with G-Cter in SUMO2); alternate. The residue at position 1054 (Thr-1054) is a Phosphothreonine. BRCT domains lie at 1085–1163 (APKV…DYLV) and 1184–1275 (RERR…FVLS).

As to quaternary structure, homodimer. Interacts with H2AX, which requires phosphorylation of H2AX on 'Ser-139'. Interacts with the MRN complex, composed of MRE11, RAD50, and NBN. Interacts with CHEK2, which requires ATM-mediated phosphorylation of 'Thr-68' within the FHA domain of CHEK2. Interacts constitutively with the BRCA1-BARD1 complex, SMC1A and TP53BP1. Interacts with ATM and FANCD2, and these interactions are reduced upon DNA damage. Also interacts with the PRKDC complex, composed of XRCC6/KU70, XRCC5/KU80 and PRKDC/XRCC7. This interaction may be required for PRKDC autophosphorylation, which is essential for DNA double strand break (DSB) repair. When phosphorylated by ATM, interacts with RNF8 (via FHA domain). Interacts with CEP164. When phosphorylated, interacts with APTX (via FHA-like domain). Interacts (when phosphorylated) with TOPBP1; promoting TOPBP1 localization to DNA damage sites during mitosis. Interacts (when phosphorylated) with NBN; promoting NBN and MRN complex localization to DNA damage sites. In terms of processing, phosphorylated upon exposure to ionizing radiation (IR), ultraviolet radiation (UV), and hydroxyurea (HU). Phosphorylation in response to IR requires ATM, NBN, and possibly CHEK2. Also phosphorylated during the G2/M phase of the cell cycle and during activation of the mitotic spindle checkpoint. Phosphorylation at Thr-4 by ATM stabilizes and enhances homodimerization via the FHA domain. Phosphorylated at Ser-168 and Ser-198 by CK2 in response to DNA damage during mitosis, promoting interaction with TOPBP1. Phosphorylated by CK2 in response to DNA damage, promoting interaction with NBN and recruitment of the MRN complex to DNA damage sites. Post-translationally, sumoylation at Lys-1034 by PIAS4 following DNA damage promotes ubiquitin-mediated degradation. Ubiquitinated by RNF4, leading to proteasomal degradation; undergoes 'Lys-48'-linked polyubiquitination.

It localises to the nucleus. The protein localises to the chromosome. Its function is as follows. Histone reader protein required for checkpoint-mediated cell cycle arrest in response to DNA damage within both the S phase and G2/M phases of the cell cycle. Specifically recognizes and binds histone H2AX phosphorylated at 'Ser-139', a marker of DNA damage, serving as a scaffold for the recruitment of DNA repair and signal transduction proteins to discrete foci of DNA damage sites. Also required for downstream events subsequent to the recruitment of these proteins. These include phosphorylation and activation of the ATM, CHEK1 and CHEK2 kinases, and stabilization of TP53/p53 and apoptosis. ATM and CHEK2 may also be activated independently by a parallel pathway mediated by TP53BP1. Required for chromosomal stability during mitosis by promoting recruitment of TOPBP1 to DNA double strand breaks (DSBs): TOPBP1 forms filamentous assemblies that bridge MDC1 and tether broken chromosomes during mitosis. Required for the repair of DSBs via homologous recombination by promoting recruitment of NBN component of the MRN complex to DSBs. The sequence is that of Mediator of DNA damage checkpoint protein 1 (Mdc1) from Rattus norvegicus (Rat).